The sequence spans 211 residues: Large ribosomal subunit protein uL4 (211 aa).

Residues 40-87 (QQAHTRQGTASTLTRSEVRGGGRKPYKQKGTGRARQGSIRTPLRPGGG) form a disordered region. The segment covering 41–54 (QAHTRQGTASTLTR) has biased composition (polar residues). A compositionally biased stretch (basic residues) spans 60 to 71 (GGRKPYKQKGTG).

The protein belongs to the universal ribosomal protein uL4 family. Part of the 50S ribosomal subunit.

Functionally, one of the primary rRNA binding proteins, this protein initially binds near the 5'-end of the 23S rRNA. It is important during the early stages of 50S assembly. It makes multiple contacts with different domains of the 23S rRNA in the assembled 50S subunit and ribosome. In terms of biological role, forms part of the polypeptide exit tunnel. This is Large ribosomal subunit protein uL4 from Synechococcus sp. (strain WH7803).